The primary structure comprises 872 residues: Armadillo repeat-containing protein 3 (872 aa).

12 ARM repeats span residues 15–54 (DVFD…KFAL), 57–96 (EENK…ILAS), 98–138 (NDVK…NMSA), 140–179 (YTSK…NLVQ), 181–220 (FQCR…VIAN), 222–262 (KESR…NCLE), 264–304 (MDTM…KAAY), 306–345 (PENR…AMCE), 346–385 (NSGS…NLTT), 388–427 (PANA…NMAM), 429–468 (EPLR…ATAC), and 470–509 (VEAR…VCAG). S-palmitoyl cysteine attachment occurs at residues C507 and C518. Residues 610 to 693 (VSPPSSMEDK…SKGKKEEEKV (84 aa)) form a disordered region. The segment covering 626-635 (RSISSSSSLR) has biased composition (low complexity). A compositionally biased stretch (basic residues) spans 636–646 (RSSKEKNKKNS). Over residues 675–693 (ATKEKGWRKSKGKKEEEKV) the composition is skewed to basic and acidic residues.

In terms of assembly, homodimer. Interacts with PIK3C3, PIK3R4 and BECN1. Interacts (via ARM domains) with ATG14. In terms of processing, palmitoylation is important for its function in autophagy. In terms of tissue distribution, expressed in skeletal muscle, brain, lung, kidney, prostate and testis. As to expression, mainly expressed in skeletal muscle, liver, spleen and thymus. Expressed only in the testis among normal tissues but is expressed frequently in various cancer tissues and, particularly, in pancreatic, lung and endometrial cancers.

In terms of biological role, essential for male fertility and sperm motility. During spermatogenesis, promotes the autophagic degradation of excessive ribosomes, providing energy resources for mitochondria and thus ensuring sperm flagellar motility. In Homo sapiens (Human), this protein is Armadillo repeat-containing protein 3 (ARMC3).